A 274-amino-acid polypeptide reads, in one-letter code: Dermonecrotic toxin SdSicTox-betaIIB1bxii (274 aa).

Residue His-5 is part of the active site. Residues Glu-25 and Asp-27 each coordinate Mg(2+). His-41 functions as the Nucleophile in the catalytic mechanism. 2 cysteine pairs are disulfide-bonded: Cys-45-Cys-51 and Cys-47-Cys-190. Asp-85 lines the Mg(2+) pocket.

This sequence belongs to the arthropod phospholipase D family. Class II subfamily. Mg(2+) is required as a cofactor. In terms of tissue distribution, expressed by the venom gland.

It is found in the secreted. The catalysed reaction is an N-(acyl)-sphingosylphosphocholine = an N-(acyl)-sphingosyl-1,3-cyclic phosphate + choline. It catalyses the reaction an N-(acyl)-sphingosylphosphoethanolamine = an N-(acyl)-sphingosyl-1,3-cyclic phosphate + ethanolamine. The enzyme catalyses a 1-acyl-sn-glycero-3-phosphocholine = a 1-acyl-sn-glycero-2,3-cyclic phosphate + choline. It carries out the reaction a 1-acyl-sn-glycero-3-phosphoethanolamine = a 1-acyl-sn-glycero-2,3-cyclic phosphate + ethanolamine. Its function is as follows. Dermonecrotic toxins cleave the phosphodiester linkage between the phosphate and headgroup of certain phospholipids (sphingolipid and lysolipid substrates), forming an alcohol (often choline) and a cyclic phosphate. This toxin acts on sphingomyelin (SM). It may also act on ceramide phosphoethanolamine (CPE), lysophosphatidylcholine (LPC) and lysophosphatidylethanolamine (LPE), but not on lysophosphatidylserine (LPS), and lysophosphatidylglycerol (LPG). It acts by transphosphatidylation, releasing exclusively cyclic phosphate products as second products. Induces dermonecrosis, hemolysis, increased vascular permeability, edema, inflammatory response, and platelet aggregation. The chain is Dermonecrotic toxin SdSicTox-betaIIB1bxii from Sicarius cf. damarensis (strain GJB-2008) (Six-eyed sand spider).